Here is a 227-residue protein sequence, read N- to C-terminus: MVEVKKHKFPGVYTVIDDDGSERIATKNLVPGQRVYGERVIKWEGEEYRIWNPNRSKLGAAIMNGLKNFPIKPGKSVLYLGIASGTTASHVSDIVGWEGKIFGIEFSPRVLRELVPIVEERRNIVPILGDATKPEEYRALVPKVDVIFEDVAQPTQAKILIDNAEVYLKRGGYGMIAVKSRSIDVTKEPEQVFREVERELSEYFEVIERLNLEPYEKDHALFVVRKT.

S-adenosyl-L-methionine contacts are provided by residues 86–87 (TT), 105–106 (EF), 130–131 (DA), and 150–153 (DVAQ).

The protein belongs to the methyltransferase superfamily. Fibrillarin family. In terms of assembly, interacts with nop5. Component of box C/D small ribonucleoprotein (sRNP) particles that contain rpl7ae, FlpA and nop5, plus a guide RNA.

Functionally, involved in pre-rRNA and tRNA processing. Utilizes the methyl donor S-adenosyl-L-methionine to catalyze the site-specific 2'-hydroxyl methylation of ribose moieties in rRNA and tRNA. Site specificity is provided by a guide RNA that base pairs with the substrate. Methylation occurs at a characteristic distance from the sequence involved in base pairing with the guide RNA. The chain is Fibrillarin-like rRNA/tRNA 2'-O-methyltransferase from Pyrococcus horikoshii (strain ATCC 700860 / DSM 12428 / JCM 9974 / NBRC 100139 / OT-3).